The primary structure comprises 240 residues: RxLR effector protein PexRD20 (240 aa).

The signal sequence occupies residues 1–23; the sequence is MRCHYFVLLAVAAFLAGANVAVA. Residues 43–58 carry the RxLR-dEER motif; that stretch reads RALRSHTKATDHGEER.

It belongs to the RxLR effector family.

The protein resides in the secreted. The protein localises to the host cytoplasm. Its subcellular location is the host nucleus. It localises to the host nucleolus. Functionally, effector that enhances P.infestans colonization of Nicotiana benthamiana leaves. This Phytophthora infestans (strain T30-4) (Potato late blight agent) protein is RxLR effector protein PexRD20.